Here is a 304-residue protein sequence, read N- to C-terminus: Aspartate carbamoyltransferase catalytic subunit (304 aa).

Residues R57 and T58 each contribute to the carbamoyl phosphate site. K85 provides a ligand contact to L-aspartate. Carbamoyl phosphate-binding residues include R107, H134, and Q137. L-aspartate contacts are provided by R167 and R216. Residues A260 and P261 each contribute to the carbamoyl phosphate site.

This sequence belongs to the aspartate/ornithine carbamoyltransferase superfamily. ATCase family. In terms of assembly, heterododecamer (2C3:3R2) of six catalytic PyrB chains organized as two trimers (C3), and six regulatory PyrI chains organized as three dimers (R2).

The enzyme catalyses carbamoyl phosphate + L-aspartate = N-carbamoyl-L-aspartate + phosphate + H(+). The protein operates within pyrimidine metabolism; UMP biosynthesis via de novo pathway; (S)-dihydroorotate from bicarbonate: step 2/3. Its function is as follows. Catalyzes the condensation of carbamoyl phosphate and aspartate to form carbamoyl aspartate and inorganic phosphate, the committed step in the de novo pyrimidine nucleotide biosynthesis pathway. This chain is Aspartate carbamoyltransferase catalytic subunit, found in Fusobacterium nucleatum subsp. nucleatum (strain ATCC 25586 / DSM 15643 / BCRC 10681 / CIP 101130 / JCM 8532 / KCTC 2640 / LMG 13131 / VPI 4355).